The sequence spans 372 residues: Queuine tRNA-ribosyltransferase (372 aa).

D89 (proton acceptor) is an active-site residue. Residues D89–F93, D161, and G232 contribute to the substrate site. An RNA binding region spans residues G262 to S268. D281 acts as the Nucleophile in catalysis. The RNA binding; important for wobble base 34 recognition stretch occupies residues T286–R290. Residues C319, C321, C324, and H351 each contribute to the Zn(2+) site.

It belongs to the queuine tRNA-ribosyltransferase family. In terms of assembly, homodimer. Within each dimer, one monomer is responsible for RNA recognition and catalysis, while the other monomer binds to the replacement base PreQ1. Zn(2+) serves as cofactor.

It carries out the reaction 7-aminomethyl-7-carbaguanine + guanosine(34) in tRNA = 7-aminomethyl-7-carbaguanosine(34) in tRNA + guanine. It participates in tRNA modification; tRNA-queuosine biosynthesis. Its function is as follows. Catalyzes the base-exchange of a guanine (G) residue with the queuine precursor 7-aminomethyl-7-deazaguanine (PreQ1) at position 34 (anticodon wobble position) in tRNAs with GU(N) anticodons (tRNA-Asp, -Asn, -His and -Tyr). Catalysis occurs through a double-displacement mechanism. The nucleophile active site attacks the C1' of nucleotide 34 to detach the guanine base from the RNA, forming a covalent enzyme-RNA intermediate. The proton acceptor active site deprotonates the incoming PreQ1, allowing a nucleophilic attack on the C1' of the ribose to form the product. After dissociation, two additional enzymatic reactions on the tRNA convert PreQ1 to queuine (Q), resulting in the hypermodified nucleoside queuosine (7-(((4,5-cis-dihydroxy-2-cyclopenten-1-yl)amino)methyl)-7-deazaguanosine). In Chlamydia felis (strain Fe/C-56) (Chlamydophila felis), this protein is Queuine tRNA-ribosyltransferase.